Consider the following 207-residue polypeptide: Ribosomal RNA small subunit methyltransferase G (207 aa).

S-adenosyl-L-methionine is bound by residues glycine 76, glutamine 81, 127–128 (VE), and arginine 141.

It belongs to the methyltransferase superfamily. RNA methyltransferase RsmG family.

The protein resides in the cytoplasm. It catalyses the reaction guanosine(527) in 16S rRNA + S-adenosyl-L-methionine = N(7)-methylguanosine(527) in 16S rRNA + S-adenosyl-L-homocysteine. Functionally, specifically methylates the N7 position of guanine in position 527 of 16S rRNA. The polypeptide is Ribosomal RNA small subunit methyltransferase G (Neisseria meningitidis serogroup C (strain 053442)).